Consider the following 423-residue polypeptide: GTPase HflX (423 aa).

The Hflx-type G domain occupies 202–366; sequence PAAAIVGYTN…LLETILRNQK (165 aa). Residues 208-215, 233-237, 255-258, 321-324, and 344-346 each bind GTP; these read GYTNAGKS, FATLD, DTVG, NKID, and SAK. The Mg(2+) site is built by Ser215 and Thr235.

Belongs to the TRAFAC class OBG-HflX-like GTPase superfamily. HflX GTPase family. Monomer. Associates with the 50S ribosomal subunit. It depends on Mg(2+) as a cofactor.

Its subcellular location is the cytoplasm. Functionally, GTPase that associates with the 50S ribosomal subunit and may have a role during protein synthesis or ribosome biogenesis. The protein is GTPase HflX of Lacrimispora saccharolytica (strain ATCC 35040 / DSM 2544 / NRCC 2533 / WM1) (Clostridium saccharolyticum).